A 1886-amino-acid polypeptide reads, in one-letter code: Nuclear pore membrane glycoprotein 210 (1886 aa).

The signal sequence occupies residues 1-25 (MARASLIQPGLWALLLLQAVGPAVA). Over 26 to 1805 (AKLNIPKVLL…GASLLSHFLD (1780 aa)) the chain is Perinuclear space. 4 N-linked (GlcNAc...) asparagine glycosylation sites follow: Asn337, Asn484, Asn681, and Asn1039. Residues 1078–1151 (FPPFRLIPRK…VQAVDAETGK (74 aa)) enclose the BIG2 domain. A helical membrane pass occupies residues 1806-1828 (SYQVMFFTFFALLAGTAVTIIAY). Over 1829–1886 (HTVCAPRELASPLALTPHASPQHSPHYLASSPTAFNTLPSDRKASPPSGLWSPAYASH) the chain is Cytoplasmic. Phosphoserine is present on Ser1839. The residue at position 1844 (Thr1844) is a Phosphothreonine. Positions 1866-1886 (LPSDRKASPPSGLWSPAYASH) are disordered. A phosphoserine mark is found at Ser1873, Ser1876, Ser1880, and Ser1885.

The protein belongs to the NUP210 family. As to quaternary structure, forms dimers and possibly higher-order oligomers. Post-translationally, N-glycosylated, but not all potential glycosylation sites may be used. Contains high-mannose type oligosaccharides. In terms of processing, phosphorylated at Ser-1880 in mitosis specifically; not phosphorylated in interphase.

It is found in the nucleus. The protein localises to the nuclear pore complex. Its subcellular location is the nucleus membrane. It localises to the endoplasmic reticulum membrane. In terms of biological role, nucleoporin essential for nuclear pore assembly and fusion, nuclear pore spacing, as well as structural integrity. The protein is Nuclear pore membrane glycoprotein 210 (Nup210) of Rattus norvegicus (Rat).